Here is a 395-residue protein sequence, read N- to C-terminus: Phosphoglycerate kinase (395 aa).

Substrate contacts are provided by residues 21–23 (DLN), Arg-36, 59–62 (HLGR), Arg-114, and Arg-147. ATP-binding positions include Lys-198, Glu-320, and 346 to 349 (GGDT).

This sequence belongs to the phosphoglycerate kinase family. Monomer.

It localises to the cytoplasm. The catalysed reaction is (2R)-3-phosphoglycerate + ATP = (2R)-3-phospho-glyceroyl phosphate + ADP. The protein operates within carbohydrate degradation; glycolysis; pyruvate from D-glyceraldehyde 3-phosphate: step 2/5. In Nitrosospira multiformis (strain ATCC 25196 / NCIMB 11849 / C 71), this protein is Phosphoglycerate kinase.